We begin with the raw amino-acid sequence, 540 residues long: Terminase large subunit (540 aa).

Residues D352, D424, and D523 each contribute to the Mn(2+) site.

The protein belongs to the skunavirus terminase large subunit family. Interacts with the terminase small subunit; the active complex is probably heterooligomeric. The cofactor is Mn(2+). Mg(2+) serves as cofactor.

In terms of biological role, probable terminase large subunit. The terminase large subunit acts as an ATP driven molecular motor necessary for viral DNA translocation into empty capsids and as an endonuclease that cuts the viral genome to initiate and to end a packaging reaction. The terminase lies at a unique vertex of the procapsid and is composed of two subunits, a small terminase subunit involved in viral DNA recognition (packaging sequence), and a large terminase subunit possessing endonucleolytic and ATPase activities. Both terminase subunits heterooligomerize and are docked on the portal protein to form the packaging machine. The terminase large subunit exhibits endonuclease activity and cleaves the viral genome concatemer. This chain is Terminase large subunit, found in Lactococcus lactis (Lactococcus lactis bacteriophage p2).